The following is a 314-amino-acid chain: MPNLKAIRDRIQSVKNTKKITEAMRLVAAAKVRRAQEQVLSTRPFADALAQVLYNLQNRLSFAETELPLFEQREPKAVALLVVTGDRGLCGGYNVNAIKRAEQRAKELKNQGIAVKLVLVGSKAKQYFGRRDYDVAASYANLEQIPNASEAAQIADSLVALFVSETVDRVELIYTRFVSLISSQPVVQTLFPLSPQGLEAPDDEIFRLITRGGKFQVEREKVEAPVESFPQDMIFEQDPVQILEALLPLYNTNQLLRALQESAASELAARMTAMSNASDNAGQLIGTLTLSYNKARQAAITQELLEVVAGANSL.

The protein belongs to the ATPase gamma chain family. In terms of assembly, F-type ATPases have 2 components, CF(1) - the catalytic core - and CF(0) - the membrane proton channel. CF(1) has five subunits: alpha(3), beta(3), gamma(1), delta(1), epsilon(1). CF(0) has three main subunits: a, b and c.

It is found in the cellular thylakoid membrane. Functionally, produces ATP from ADP in the presence of a proton gradient across the membrane. The gamma chain is believed to be important in regulating ATPase activity and the flow of protons through the CF(0) complex. The protein is ATP synthase gamma chain of Synechocystis sp. (strain ATCC 27184 / PCC 6803 / Kazusa).